The following is a 131-amino-acid chain: Large ribosomal subunit protein bL17 (131 aa).

This sequence belongs to the bacterial ribosomal protein bL17 family. Part of the 50S ribosomal subunit. Contacts protein L32.

The protein is Large ribosomal subunit protein bL17 of Vesicomyosocius okutanii subsp. Calyptogena okutanii (strain HA).